The following is a 254-amino-acid chain: Tubulin-specific chaperone B (254 aa).

The region spanning 182–225 (PLPLDVMGTWCGVEFPEAAGKNDGRINGVTLFGPVAPGHGSFVR) is the CAP-Gly domain. The disordered stretch occupies residues 234–254 (KDEESAEVEDVHDDVESDDEI). The span at 237–254 (ESAEVEDVHDDVESDDEI) shows a compositional bias: acidic residues.

It belongs to the TBCB family. Binds to monomeric alpha-tubulin.

Its subcellular location is the cytoplasm. It localises to the cytoskeleton. In terms of biological role, acts to sequester alpha-tubulin from interaction with beta-tubulin, raising the possibility that it plays a regulatory role in the formation of the tubulin heterodimer. The sequence is that of Tubulin-specific chaperone B (ALF1) from Saccharomyces cerevisiae (strain ATCC 204508 / S288c) (Baker's yeast).